Consider the following 345-residue polypeptide: Isocitrate/homoisocitrate dehydrogenase (345 aa).

An NADH-binding site is contributed by Thr-69–Thr-71. (2R,3S)-homoisocitrate-binding residues include Arg-86, Arg-96, Arg-111, Tyr-118, Lys-163, and Asn-165. NADH is bound at residue Asn-165. Residues Asp-194, Asp-218, and Asp-222 each coordinate Mg(2+). Residues Gly-251–Asp-255 and Asn-263 each bind NADH.

It belongs to the isocitrate and isopropylmalate dehydrogenases family. Mn(2+) is required as a cofactor. The cofactor is Mg(2+).

The enzyme catalyses D-threo-isocitrate + NAD(+) = 2-oxoglutarate + CO2 + NADH. The catalysed reaction is (2R,3S)-homoisocitrate + NAD(+) = 2-oxoadipate + CO2 + NADH. The protein operates within amino-acid biosynthesis; L-lysine biosynthesis via AAA pathway; L-alpha-aminoadipate from 2-oxoglutarate: step 4/5. Its function is as follows. Catalyzes the NAD(+)-dependent oxidative decarboxylation of homoisocitrate to 2-oxoadipate (alpha-ketoadipate), and of isocitrate to 2-oxoglutarate, at near equal efficiency. May thus play a dual role in glutamate and lysine biosynthesis in vivo. Preferentially uses NAD over NADP. The protein is Isocitrate/homoisocitrate dehydrogenase of Pyrococcus horikoshii (strain ATCC 700860 / DSM 12428 / JCM 9974 / NBRC 100139 / OT-3).